A 55-amino-acid polypeptide reads, in one-letter code: ATP synthase small subunit 6, mitochondrial (55 aa).

The transit peptide at 1–15 directs the protein to the mitochondrion; that stretch reads MRQFDPWPVFFRREW. Residues 20 to 39 form a helical membrane-spanning segment; sequence PFLVGFAVTGAIITKMSLGF.

Belongs to the ATPase 6 subunit family.

It localises to the mitochondrion inner membrane. Mitochondrial membrane ATP synthase (F(1)F(0) ATP synthase or Complex V) produces ATP from ADP in the presence of a proton gradient across the membrane which is generated by electron transport complexes of the respiratory chain. F-type ATPases consist of two structural domains, F(1) - containing the extramembraneous catalytic core and F(0) - containing the membrane proton channel, linked together by a central stalk and a peripheral stalk. During catalysis, ATP synthesis in the catalytic domain of F(1) is coupled via a rotary mechanism of the central stalk subunits to proton translocation. Part of the complex F(0) domain. Confers tolerance to several abiotic stresses (e.g. salt, mannitol, drought, oxidative and cold stresses), probably by providing additional energy needed for cell homeostasis. The polypeptide is ATP synthase small subunit 6, mitochondrial (Solanum tuberosum (Potato)).